A 255-amino-acid polypeptide reads, in one-letter code: Probable ubiquitin carboxyl-terminal hydrolase (255 aa).

The 225-residue stretch at 13 to 237 (NWIPLEANPE…IRFNLMGLVK (225 aa)) folds into the UCH catalytic domain. Residues 16–21 (PLEANP) form an interaction with ubiquitin region. C103 functions as the Nucleophile in the catalytic mechanism. Catalysis depends on H177, which acts as the Proton donor. The interval 227–232 (EIRFNL) is interaction with ubiquitin. The segment at 235–255 (LVKKPNEESEEEEEKEKEETK) is disordered. Residues 242–255 (ESEEEEEKEKEETK) are compositionally biased toward acidic residues.

The protein belongs to the peptidase C12 family.

The protein resides in the cytoplasm. It carries out the reaction Thiol-dependent hydrolysis of ester, thioester, amide, peptide and isopeptide bonds formed by the C-terminal Gly of ubiquitin (a 76-residue protein attached to proteins as an intracellular targeting signal).. In terms of biological role, ubiquitin-protein hydrolase is involved both in the processing of ubiquitin precursors and of ubiquitinated proteins. This enzyme is a thiol protease that recognizes and hydrolyzes a peptide bond at the C-terminal glycine of either ubiquitin or nedd8. The sequence is that of Probable ubiquitin carboxyl-terminal hydrolase (uch1) from Dictyostelium discoideum (Social amoeba).